A 162-amino-acid chain; its full sequence is Selenoprotein F (162 aa).

Residues 1-28 form the signal peptide; sequence MAAEPGGWLGPALGLRLLLATALQMVSA. Residue Sec93 is a non-standard amino acid, selenocysteine.

It belongs to the selenoprotein M/F family. In terms of assembly, forms a tight complex with UGGT1/UGCGL1. Interacts with UGGT2/UGCGL2. Interacts with RDH11.

It localises to the endoplasmic reticulum lumen. In terms of biological role, may be involved in redox reactions associated with the formation of disulfide bonds. May contribute to the quality control of protein folding in the endoplasmic reticulum. May regulate protein folding by enhancing the catalytic activity of UGGT1/UGCGL1 and UGGT2/UGCGL2. The sequence is that of Selenoprotein F from Sus scrofa (Pig).